Here is a 338-residue protein sequence, read N- to C-terminus: Ketol-acid reductoisomerase (NADP(+)) (338 aa).

Residues 1-181 form the KARI N-terminal Rossmann domain; it reads MNVYYDKDCD…GGGRSGIIET (181 aa). NADP(+) is bound by residues 24 to 27, Arg-47, Ser-50, Ser-52, and 82 to 85; these read YGSQ and DEFQ. Residue His-107 is part of the active site. Residue Gly-133 coordinates NADP(+). The region spanning 182–327 is the KARI C-terminal knotted domain; the sequence is TFKDETETDL…AKLRSMMPWI (146 aa). Residues Asp-190, Glu-194, Glu-226, and Glu-230 each contribute to the Mg(2+) site. A substrate-binding site is contributed by Ser-251.

Belongs to the ketol-acid reductoisomerase family. It depends on Mg(2+) as a cofactor.

The enzyme catalyses (2R)-2,3-dihydroxy-3-methylbutanoate + NADP(+) = (2S)-2-acetolactate + NADPH + H(+). The catalysed reaction is (2R,3R)-2,3-dihydroxy-3-methylpentanoate + NADP(+) = (S)-2-ethyl-2-hydroxy-3-oxobutanoate + NADPH + H(+). Its pathway is amino-acid biosynthesis; L-isoleucine biosynthesis; L-isoleucine from 2-oxobutanoate: step 2/4. It functions in the pathway amino-acid biosynthesis; L-valine biosynthesis; L-valine from pyruvate: step 2/4. In terms of biological role, involved in the biosynthesis of branched-chain amino acids (BCAA). Catalyzes an alkyl-migration followed by a ketol-acid reduction of (S)-2-acetolactate (S2AL) to yield (R)-2,3-dihydroxy-isovalerate. In the isomerase reaction, S2AL is rearranged via a Mg-dependent methyl migration to produce 3-hydroxy-3-methyl-2-ketobutyrate (HMKB). In the reductase reaction, this 2-ketoacid undergoes a metal-dependent reduction by NADPH to yield (R)-2,3-dihydroxy-isovalerate. This chain is Ketol-acid reductoisomerase (NADP(+)), found in Psychrobacter sp. (strain PRwf-1).